The primary structure comprises 156 residues: Arginine repressor (156 aa).

The protein belongs to the ArgR family.

The protein resides in the cytoplasm. It participates in amino-acid biosynthesis; L-arginine biosynthesis [regulation]. In terms of biological role, regulates arginine biosynthesis genes. This chain is Arginine repressor, found in Shewanella pealeana (strain ATCC 700345 / ANG-SQ1).